The following is a 195-amino-acid chain: SAGA-associated factor 11 homolog (195 aa).

Residues 1–22 (MSAANMPTTTGAQGSGNQVPRT) are disordered. The segment at 105 to 126 (CTCPNCDRLVAAARFAPHLEKC) adopts an SGF11-type zinc-finger fold. A disordered region spans residues 140–195 (RLATKEGATSAHLHSSGNTGGTDDEDDVDWSSDKRRKKSNQNSRNNGSKKNNGKTF). Ser-171 is subject to Phosphoserine. Positions 179 to 195 (NQNSRNNGSKKNNGKTF) are enriched in low complexity.

It belongs to the SGF11 family. Component of some SAGA transcription coactivator-HAT complexes, at least composed of Ada2b, not/nonstop, Pcaf/Gcn5, Sgf11 and Spt3. Within the SAGA complex, Sgf11, e(y)2, and not/nonstop form an additional subcomplex of SAGA called the DUB module (deubiquitination module). Interacts directly with not/nonstop. Interacts with the AMEX complex component xmas-2. Interacts with Cbp80; important for promoter recruitment of Sgf11 that is not associated with the DUB module.

The protein resides in the nucleus. The protein localises to the nucleoplasm. It is found in the cytoplasm. Its function is as follows. Component of the transcription regulatory histone acetylation (HAT) complex SAGA, a multiprotein complex that activates transcription by remodeling chromatin and mediating histone acetylation and deubiquitination. Within the SAGA complex, participates in a subcomplex that specifically deubiquitinates histone H2B. The SAGA complex is recruited to specific gene promoters by activators, where it is required for transcription. Required for nuclear receptor-mediated transactivation. Binds independently on SAGA to promoters in an RNA-dependent manner. Binds to mRNA and is essential for total mRNA export from the nucleus. Required to counteract heterochromatin silencing. Controls the development of neuronal connectivity in visual system by being required for accurate axon targeting in the optic lobe. Required for expression of ecdysone-induced genes such as br/broad. In Drosophila sechellia (Fruit fly), this protein is SAGA-associated factor 11 homolog.